Reading from the N-terminus, the 390-residue chain is S-adenosylmethionine synthase 1 (390 aa).

Residue glutamate 9 coordinates Mg(2+). Histidine 15 contacts ATP. Glutamate 43 contributes to the K(+) binding site. L-methionine-binding residues include glutamate 56 and glutamine 99. ATP-binding positions include 167–169, 235–238, aspartate 246, 252–253, alanine 269, lysine 273, and lysine 277; these read DGK, SGRF, and RK. Aspartate 246 contributes to the L-methionine binding site. Lysine 277 contributes to the L-methionine binding site.

Belongs to the AdoMet synthase family. As to quaternary structure, homotetramer. The cofactor is Mn(2+). Requires Mg(2+) as cofactor. Co(2+) serves as cofactor. It depends on K(+) as a cofactor.

It is found in the cytoplasm. It carries out the reaction L-methionine + ATP + H2O = S-adenosyl-L-methionine + phosphate + diphosphate. The protein operates within amino-acid biosynthesis; S-adenosyl-L-methionine biosynthesis; S-adenosyl-L-methionine from L-methionine: step 1/1. Its function is as follows. Catalyzes the formation of S-adenosylmethionine from methionine and ATP. The reaction comprises two steps that are both catalyzed by the same enzyme: formation of S-adenosylmethionine (AdoMet) and triphosphate, and subsequent hydrolysis of the triphosphate. This chain is S-adenosylmethionine synthase 1 (SAM1), found in Petunia hybrida (Petunia).